The following is a 568-amino-acid chain: Small ribosomal subunit protein bS1 (568 aa).

6 consecutive S1 motif domains span residues 39 to 100, 118 to 184, 205 to 273, 290 to 360, 377 to 447, and 464 to 533; these read KTVV…LSRE, GEFV…VSRR, GMVL…LGIK, GKQM…LSIK, GTII…LGIK, and GTIV…LSVK.

Belongs to the bacterial ribosomal protein bS1 family.

In terms of biological role, binds mRNA; thus facilitating recognition of the initiation point. It is needed to translate mRNA with a short Shine-Dalgarno (SD) purine-rich sequence. This Rickettsia conorii (strain ATCC VR-613 / Malish 7) protein is Small ribosomal subunit protein bS1 (rpsA).